Consider the following 443-residue polypeptide: Thymidine phosphorylase (443 aa).

It belongs to the thymidine/pyrimidine-nucleoside phosphorylase family. In terms of assembly, homodimer.

It carries out the reaction thymidine + phosphate = 2-deoxy-alpha-D-ribose 1-phosphate + thymine. It participates in pyrimidine metabolism; dTMP biosynthesis via salvage pathway; dTMP from thymine: step 1/2. Its function is as follows. The enzymes which catalyze the reversible phosphorolysis of pyrimidine nucleosides are involved in the degradation of these compounds and in their utilization as carbon and energy sources, or in the rescue of pyrimidine bases for nucleotide synthesis. The polypeptide is Thymidine phosphorylase (Shewanella baltica (strain OS185)).